We begin with the raw amino-acid sequence, 103 residues long: N(4)-acetylcytidine amidohydrolase (103 aa).

In terms of domain architecture, ASCH spans Ile6 to Lys101. The Proton acceptor role is filled by Lys21. The active-site Nucleophile is the Thr24. Glu74 serves as the catalytic Proton donor.

Belongs to the N(4)-acetylcytidine amidohydrolase family.

The catalysed reaction is N(4)-acetylcytidine + H2O = cytidine + acetate + H(+). The enzyme catalyses N(4)-acetyl-2'-deoxycytidine + H2O = 2'-deoxycytidine + acetate + H(+). It catalyses the reaction N(4)-acetylcytosine + H2O = cytosine + acetate + H(+). Catalyzes the hydrolysis of N(4)-acetylcytidine (ac4C). This is N(4)-acetylcytidine amidohydrolase (yqfB) from Escherichia coli O81 (strain ED1a).